The following is a 957-amino-acid chain: Retinoblastoma-related protein 1 (957 aa).

Residues 369 to 569 (TPVSTAMTTA…EKGSSMYNSL (201 aa)) form a domain A region. A pocket region spans residues 369 to 808 (TPVSTAMTTA…NEVFIPTVKP (440 aa)). The tract at residues 570–677 (IVARPTLSAE…PAAGGETCAE (108 aa)) is spacer. The segment at 678–808 (TGIGVFLSKI…NEVFIPTVKP (131 aa)) is domain B. The tract at residues 814–854 (GPGTSPNRNNEPKSGGDAASFPESPRLSRFPNLPDMSPKKV) is disordered.

This sequence belongs to the retinoblastoma protein (RB) family.

It is found in the nucleus. Functionally, regulator of biological processes that recruits a histone deacetylase to control gene transcription. May play a role in the entry into mitosis, negatively regulating the cell proliferation. Formation of stable complexes with geminiviridae replication-associated proteins may create a cellular environment which favors viral DNA replication. The sequence is that of Retinoblastoma-related protein 1 (RBR1) from Triticum aestivum (Wheat).